The chain runs to 391 residues: Polyisoprenyl-teichoic acid--peptidoglycan teichoic acid transferase TagV (391 aa).

The Cytoplasmic portion of the chain corresponds to 1–23 (MAERVRVRVRKKKKSKRRKILKR). The chain crosses the membrane as a helical; Signal-anchor for type II membrane protein span at residues 24–44 (IMLLFALALLVVVGLGGYKLY). At 45–391 (KTINAADESY…TTNSTTDSSY (347 aa)) the chain is on the extracellular side. A disordered region spans residues 329–391 (DYTPDTSTGT…TTNSTTDSSY (63 aa)). The segment covering 333-391 (DTSTGTSGTEDGTDSSSSSGSTGSTGTTTDGTTNGSSYSNDSSTSSNNSTTNSTTDSSY) has biased composition (low complexity).

This sequence belongs to the LytR/CpsA/Psr (LCP) family.

Its subcellular location is the cell membrane. Its pathway is cell wall biogenesis. Its function is as follows. May catalyze the final step in cell wall teichoic acid biosynthesis, the transfer of the anionic cell wall polymers (APs) from their lipid-linked precursor to the cell wall peptidoglycan (PG). This is Polyisoprenyl-teichoic acid--peptidoglycan teichoic acid transferase TagV from Bacillus subtilis (strain 168).